The following is a 230-amino-acid chain: MVKLVFARHGESEWNKANLFTGWADVDLSEKGTQQAIDAGKLIKEAGIEFDQAYTSVLKRAIKTTNLALEASDQLWVPVEKSWRLNERHYGGLTGKNKAEAAEQFGDEQVHIWRRSYDVLPPNMDRDDEHSAHTDRRYASLDDSVIPDAENLKVTLERALPFWEDKIAPALKDGKNVFVGAHGNSIRALVKHIKGLSDDEIMDVEIPNFPPLVFEFDEKLNVVSEYYLGK.

Residues 8–15, 21–22, arginine 60, 87–90, lysine 98, 114–115, and 183–184 each bind substrate; these read RHGESEWN, TG, ERHY, RR, and GN. The active-site Tele-phosphohistidine intermediate is the histidine 9. The active-site Proton donor/acceptor is glutamate 87.

The protein belongs to the phosphoglycerate mutase family. BPG-dependent PGAM subfamily.

It catalyses the reaction (2R)-2-phosphoglycerate = (2R)-3-phosphoglycerate. Its pathway is carbohydrate degradation; glycolysis; pyruvate from D-glyceraldehyde 3-phosphate: step 3/5. In terms of biological role, catalyzes the interconversion of 2-phosphoglycerate and 3-phosphoglycerate. The polypeptide is 2,3-bisphosphoglycerate-dependent phosphoglycerate mutase (Streptococcus pneumoniae (strain ATCC BAA-255 / R6)).